Here is a 270-residue protein sequence, read N- to C-terminus: Imidazole glycerol phosphate synthase subunit HisF (270 aa).

Catalysis depends on residues aspartate 11 and aspartate 130.

The protein belongs to the HisA/HisF family. In terms of assembly, heterodimer of HisH and HisF.

It localises to the cytoplasm. It carries out the reaction 5-[(5-phospho-1-deoxy-D-ribulos-1-ylimino)methylamino]-1-(5-phospho-beta-D-ribosyl)imidazole-4-carboxamide + L-glutamine = D-erythro-1-(imidazol-4-yl)glycerol 3-phosphate + 5-amino-1-(5-phospho-beta-D-ribosyl)imidazole-4-carboxamide + L-glutamate + H(+). It participates in amino-acid biosynthesis; L-histidine biosynthesis; L-histidine from 5-phospho-alpha-D-ribose 1-diphosphate: step 5/9. Its function is as follows. IGPS catalyzes the conversion of PRFAR and glutamine to IGP, AICAR and glutamate. The HisF subunit catalyzes the cyclization activity that produces IGP and AICAR from PRFAR using the ammonia provided by the HisH subunit. The protein is Imidazole glycerol phosphate synthase subunit HisF of Sorangium cellulosum (strain So ce56) (Polyangium cellulosum (strain So ce56)).